Here is a 331-residue protein sequence, read N- to C-terminus: UBX domain-containing protein 2B (331 aa).

2 disordered regions span residues 1–26 (MAEGGGAEPEEQERRSSRPRPPSARD) and 38–63 (EMKCKSSKPDRSTATAFKSPRTPPLR). Ala-2 bears the N-acetylalanine mark. Residues 38–48 (EMKCKSSKPDR) are compositionally biased toward basic and acidic residues. The residue at position 56 (Ser-56) is a Phosphoserine. Thr-59 bears the Phosphothreonine mark. Residue Ser-66 is modified to Phosphoserine. Residues 141–206 (DVQILLRLWS…MEDHQDQEYI (66 aa)) form the SEP domain. Ser-231, Ser-234, and Ser-235 each carry phosphoserine. One can recognise a UBX domain in the interval 252–329 (DSVPTTKIQI…DILNTVILQQ (78 aa)).

Belongs to the NSFL1C family. In terms of assembly, interacts with VCP. Does not bind ubiquitin. Present at high level in brain. Also present in liver, kidney, spleen, testis, lung and heart (at protein level).

The protein localises to the nucleus. The protein resides in the cytoplasm. It is found in the cytosol. It localises to the endoplasmic reticulum. Its subcellular location is the golgi apparatus. The protein localises to the cytoskeleton. The protein resides in the microtubule organizing center. It is found in the centrosome. In terms of biological role, adapter protein required for Golgi and endoplasmic reticulum biogenesis. Involved in Golgi and endoplasmic reticulum maintenance during interphase and in their reassembly at the end of mitosis. The complex formed with VCP has membrane fusion activity; membrane fusion activity requires USO1-GOLGA2 tethering and BET1L. VCPIP1 is also required, but not its deubiquitinating activity. Together with NSFL1C/p47, regulates the centrosomal levels of kinase AURKA/Aurora A during mitotic progression by promoting AURKA removal from centrosomes in prophase. Also, regulates spindle orientation during mitosis. The sequence is that of UBX domain-containing protein 2B (Ubxn2b) from Rattus norvegicus (Rat).